Reading from the N-terminus, the 86-residue chain is Small ribosomal subunit protein uS17 (86 aa).

It belongs to the universal ribosomal protein uS17 family. In terms of assembly, part of the 30S ribosomal subunit.

In terms of biological role, one of the primary rRNA binding proteins, it binds specifically to the 5'-end of 16S ribosomal RNA. In Shouchella clausii (strain KSM-K16) (Alkalihalobacillus clausii), this protein is Small ribosomal subunit protein uS17.